Consider the following 44-residue polypeptide: Antimicrobial peptide 2 (44 aa).

In terms of processing, disulfide bonds. In terms of tissue distribution, expressed in flowers but not in leaves, seeds or roots (at protein level).

Antimicrobial peptide. Active against fungal species B.cinerea (IC(50)=5.2 uM), A.niger (IC(50)=2.6 uM) and B.sorokinina (IC(50)=5.2 uM) but not against F.oxysporum, F.graminearum and P.debaryanum at concentrations below 10 uM. Inhibits growth of P.infestans at concentration between 1.3 uM and 5.2 uM. Active against bacterial species P.syringae, B.subtilis, X.campestris and C.michiganense. The protein is Antimicrobial peptide 2 of Taraxacum officinale (Common dandelion).